Reading from the N-terminus, the 229-residue chain is MAKLTKKMKAIKAGVDSTKAYEINEAIAVLKQFATAKFVESVDVAVNLGIDPRKSHQNVRGATVLPHGTGRTARVAVFTQGENAEAAKAPGADLVGMEDLAEQIKKGEKNFDVVIPSPDAMRVVGQLGQVLGPRGLIPNLKVGTVTPNVVEAVKNAKSGQIRPRNAKNGIIHTTIGKADFAPEQLKDNLVALLAALNKAKPTTVKGIFIKKVSISTTMGAGVAVDQASL.

It belongs to the universal ribosomal protein uL1 family. Part of the 50S ribosomal subunit.

Its function is as follows. Binds directly to 23S rRNA. The L1 stalk is quite mobile in the ribosome, and is involved in E site tRNA release. In terms of biological role, protein L1 is also a translational repressor protein, it controls the translation of the L11 operon by binding to its mRNA. In Actinobacillus pleuropneumoniae serotype 3 (strain JL03), this protein is Large ribosomal subunit protein uL1.